Reading from the N-terminus, the 211-residue chain is uncharacterized protein (211 aa).

The protein belongs to the nucleoside deoxyribosyltransferase family.

The protein resides in the cytoplasm. The protein localises to the nucleus. This is an uncharacterized protein from Schizosaccharomyces pombe (strain 972 / ATCC 24843) (Fission yeast).